Consider the following 237-residue polypeptide: Urease accessory protein UreF (237 aa).

This sequence belongs to the UreF family. In terms of assembly, ureD, UreF and UreG form a complex that acts as a GTP-hydrolysis-dependent molecular chaperone, activating the urease apoprotein by helping to assemble the nickel containing metallocenter of UreC. The UreE protein probably delivers the nickel.

It localises to the cytoplasm. Functionally, required for maturation of urease via the functional incorporation of the urease nickel metallocenter. The sequence is that of Urease accessory protein UreF from Streptococcus thermophilus (strain ATCC BAA-250 / LMG 18311).